The primary structure comprises 358 residues: Glutamine synthetase (358 aa).

The GS beta-grasp domain occupies 25–104 (VQAEYIWIDA…VLCECYDNDG (80 aa)). The GS catalytic domain occupies 111-358 (YRAHCKKVMD…ILVETTVLNN (248 aa)).

The protein belongs to the glutamine synthetase family. Homooctamer.

The protein localises to the cytoplasm. It catalyses the reaction L-glutamate + NH4(+) + ATP = L-glutamine + ADP + phosphate + H(+). This is Glutamine synthetase (GLN1) from Cryptococcus neoformans var. neoformans serotype D (strain B-3501A) (Filobasidiella neoformans).